Consider the following 145-residue polypeptide: FAD synthase (145 aa).

ATP is bound by residues 9 to 10, 14 to 17, D94, and Y122; these read TF and HPGH.

The protein belongs to the archaeal FAD synthase family. Homodimer. It depends on a divalent metal cation as a cofactor.

The catalysed reaction is FMN + ATP + H(+) = FAD + diphosphate. It participates in cofactor biosynthesis; FAD biosynthesis; FAD from FMN: step 1/1. In terms of biological role, catalyzes the transfer of the AMP portion of ATP to flavin mononucleotide (FMN) to produce flavin adenine dinucleotide (FAD) coenzyme. The protein is FAD synthase of Methanocaldococcus infernus (strain DSM 11812 / JCM 15783 / ME).